The sequence spans 238 residues: MRPHGRARDAMREIKLEAGVSVYAEGSCLARFGGTHVLCTASIEESVPPWMRGGGKGWVTAEYGMLPRATHTRSRREATAGKQSGRTQEIQRLIGRSLRAVVDLKALGERQITIDCDVLQADGGTRTAAITGAWVALKQATGYLIEEGLLTSDPVHGQLAAISCGVIDGETRLDLEYEEDRRAEADANFVLTDTGGIVEIQATAEDKPIPETDFDLLFALAKAGVVDLCEAQLAALKG.

Phosphate is bound by residues R86 and G124 to R126.

The protein belongs to the RNase PH family. As to quaternary structure, homohexameric ring arranged as a trimer of dimers.

It carries out the reaction tRNA(n+1) + phosphate = tRNA(n) + a ribonucleoside 5'-diphosphate. In terms of biological role, phosphorolytic 3'-5' exoribonuclease that plays an important role in tRNA 3'-end maturation. Removes nucleotide residues following the 3'-CCA terminus of tRNAs; can also add nucleotides to the ends of RNA molecules by using nucleoside diphosphates as substrates, but this may not be physiologically important. Probably plays a role in initiation of 16S rRNA degradation (leading to ribosome degradation) during starvation. This chain is Ribonuclease PH, found in Maricaulis maris (strain MCS10) (Caulobacter maris).